Here is a 242-residue protein sequence, read N- to C-terminus: Terpene cyclase cle7 (242 aa).

7 helical membrane passes run 20–40 (LLLTLFSLSGTGWLINYITTI), 50–69 (GVSLVALTNNLAWELVFAIL), 79–101 (VILRSWLFVDIFVIYTTAKFARS), 117–137 (LFVLFGILGFFSGHWALSVLL), 143–163 (FYWSGMMCLVVMSGTALGILV), 172–192 (SYGMWFSRFVGSIFAVASLFL), and 207–227 (ILMRWFAGAFVVLDGLYGVCF).

It belongs to the paxB family.

It is found in the membrane. It functions in the pathway secondary metabolite biosynthesis; terpenoid biosynthesis. In terms of biological role, non-reducing polyketide synthase; part of the cluster A that mediates the biosynthesis of chevalone E and its oxidized derivatives that possess a unique five-membered lactone ring and can synergistically enhance the cytotoxicity of doxorubicin (DOX) in breast cancer cells. Within the pathway, cle7 takes part to the biosynthesis of the molecular scaffold by catalyzing the cyclization of the prenyl group initiated by protonation and ring-opening of the epoxide to produce the chevalone E intermediate. The molecular scaffold is commonly biosynthesized by a series of enzymes including the non-reducing polyketide synthase (NR-PKS) cle1 that produces the alpha-pyrone triacetic acid lactone (TAL); The membrane-bound prenyltransferase cle5 that accepts TAL as its substrate to perform a C-3 geranylgeranylation reaction, in which the pathway-dedicated GGPS cle6 is required to provide GGPP, the other substrate of cle5; the FAD-dependent monooxygenase Cle3 that forms an (S)-epoxide ring at the terminal olefin of the geranylgeranyl group; and the terpene cyclase Cle7 that catalyzes the cyclization of the prenyl group that yields the pentacyclic pathway intermediate chevalone E. Chevalone E can derivatize into seven new oxidized analogs by the cytochrome P450 monooxygenases cle2 (acting at C-20) and cle4 (acting at C-11 and C-12). This chain is Terpene cyclase cle7, found in Aspergillus versicolor.